Here is a 445-residue protein sequence, read N- to C-terminus: 3-phosphoshikimate 1-carboxyvinyltransferase (445 aa).

3 residues coordinate 3-phosphoshikimate: lysine 21, serine 22, and arginine 26. Lysine 21 provides a ligand contact to phosphoenolpyruvate. Phosphoenolpyruvate contacts are provided by glycine 92 and arginine 120. 3-phosphoshikimate is bound by residues serine 165, glutamine 166, aspartate 307, and lysine 334. Glutamine 166 serves as a coordination point for phosphoenolpyruvate. The active-site Proton acceptor is aspartate 307. Phosphoenolpyruvate is bound by residues arginine 338, arginine 379, and lysine 405.

Belongs to the EPSP synthase family. In terms of assembly, monomer.

It localises to the cytoplasm. The catalysed reaction is 3-phosphoshikimate + phosphoenolpyruvate = 5-O-(1-carboxyvinyl)-3-phosphoshikimate + phosphate. The protein operates within metabolic intermediate biosynthesis; chorismate biosynthesis; chorismate from D-erythrose 4-phosphate and phosphoenolpyruvate: step 6/7. Catalyzes the transfer of the enolpyruvyl moiety of phosphoenolpyruvate (PEP) to the 5-hydroxyl of shikimate-3-phosphate (S3P) to produce enolpyruvyl shikimate-3-phosphate and inorganic phosphate. The chain is 3-phosphoshikimate 1-carboxyvinyltransferase from Chlamydia felis (strain Fe/C-56) (Chlamydophila felis).